The chain runs to 634 residues: Phototropic-responsive NPH3 family protein NPY2 (634 aa).

A BTB domain is found at 29-97 (SDISVDVEGS…CYGMTVTLSA (69 aa)). Residues 207 to 488 (DWWVEDLCEL…VQVLFFEQVR (282 aa)) enclose the NPH3 domain. Tyr429 carries the post-translational modification Phosphotyrosine. Disordered stretches follow at residues 492-517 (SSGS…YGSS) and 584-634 (QLQS…VSVS). Over residues 588–602 (KGGGEKNNGGGGGGS) the composition is skewed to gly residues. The span at 619 to 634 (KTATPSRNLTRRVSVS) shows a compositional bias: polar residues.

The protein belongs to the NPH3 family. Specifically expressed in the hypophysis and the root meristems in the embryos. Highly expressed in primary root tips and radicles.

It is found in the cell membrane. The protein localises to the cytoplasm. It localises to the cytosol. Its pathway is protein modification; protein ubiquitination. In terms of biological role, may act as a substrate-specific adapter of an E3 ubiquitin-protein ligase complex (CUL3-RBX1-BTB) which mediates the ubiquitination and subsequent proteasomal degradation of target proteins. Plays an essential role in auxin-mediated organogenesis and in root gravitropic responses through the control of PIN proteins (e.g. PIN1 and PIN2) polarity in the root tip endodermal cell layer and in shoot epidermis. Recruited to the plasma membrane by PINs (e.g. PIN1 and PIN2) and, in concert with AGC kinases-mediated (e.g. D6PK and PID) PINs phosphorylation, maintains their polarity through limiting lateral diffusion-based escape. The polypeptide is Phototropic-responsive NPH3 family protein NPY2 (Arabidopsis thaliana (Mouse-ear cress)).